The primary structure comprises 198 residues: COMM domain-containing protein 9 (198 aa).

The residue at position 2 (A2) is an N-acetylalanine. The 75-residue stretch at 122 to 196 (RLVDLDWRVD…RIRDQLSAVA (75 aa)) folds into the COMM domain.

The protein belongs to the COMM domain-containing protein 9 family. As to quaternary structure, component of the commander complex consisting of the CCC subcomplex and the retriever subcomplex. Component of the CCC (COMMD/CCDC22/CCDC93) subcomplex consisting of COMMD1, COMMD2, COMMD3, COMMD4, COMMD5, COMMD6, COMMD7, COMMD8, COMMD9, COMMD10, CCDC22 and CCDC93; within the complex forms a heterodimer with COMMD7. Interacts with RELB and NFKB1/p105. Interacts with CCDC22, CCDC93, SCNN1B, CUL1.

It localises to the nucleus. It is found in the cytoplasmic vesicle. In terms of biological role, scaffold protein in the commander complex that is essential for endosomal recycling of transmembrane cargos; the commander complex is composed of the CCC subcomplex and the retriever subcomplex. May modulate activity of cullin-RING E3 ubiquitin ligase (CRL) complexes. May down-regulate activation of NF-kappa-B. Modulates Na(+) transport in epithelial cells by regulation of apical cell surface expression of amiloride-sensitive sodium channel (ENaC) subunits. This Bos taurus (Bovine) protein is COMM domain-containing protein 9 (COMMD9).